Here is a 552-residue protein sequence, read N- to C-terminus: Cycloheximide resistance protein (552 aa).

The segment at V46 to Q70 is disordered. Positions L47–S56 are enriched in polar residues. The next 12 membrane-spanning stretches (helical) occupy residues A100–Y120, L137–S157, T168–S188, L194–G213, Y225–I246, W262–L282, I346–V362, Y381–V399, L419–T439, N445–F464, V477–S494, and W518–L539.

This sequence belongs to the major facilitator superfamily. CAR1 family.

The protein resides in the membrane. Its function is as follows. Probable transporter. Confers resistance to cycloheximide. The sequence is that of Cycloheximide resistance protein (CYHR) from Candida maltosa (Yeast).